Consider the following 432-residue polypeptide: Cytoplasmic 60S subunit biogenesis factor REH1 (432 aa).

Residues 6 to 30 form a C2H2-type 1 zinc finger; that stretch reads FTCNCCVIQFKTSDLQRYHMKTEWH. The tract at residues 79–150 is disordered; that stretch reads QSNALPQKQK…NTDYGEDTVS (72 aa). The span at 86–98 shows a compositional bias: basic residues; it reads KQKKPIKSKRGRK. Positions 105–117 are enriched in basic and acidic residues; sequence KRKDRDIAKEKQN. Residues 118–143 are compositionally biased toward polar residues; that stretch reads RSVSPSGSISSQLSNLTVGTENTNTD. C2H2-type zinc fingers lie at residues 186-209 and 237-261; these read TECIYCGKDNKEVERNVKHMFSEH and HNCLCCNFHGSGLESIRAHMASKRH.

The protein belongs to the REI1 family. Associates with nascent pre-60S particles that have not yet entered the translating pool, and is released from mature 60S subunits. Interacts with pre-60S factors NMD3, LSG1, and TIF6.

It is found in the cytoplasm. Pre-60S-associated cytoplasmic factor involved in the cytoplasmic maturation of the 60S subunit. May act redundantly with REI1 to directly promote a stabilizing structural rearrangement in cytoplasmic 60S subunit maturation independent on the REI1-specific ARX1 recycling. The protein is Cytoplasmic 60S subunit biogenesis factor REH1 (REH1) of Saccharomyces cerevisiae (strain ATCC 204508 / S288c) (Baker's yeast).